A 65-amino-acid polypeptide reads, in one-letter code: Large ribosomal subunit protein eL24 (65 aa).

Zn(2+) is bound by residues Cys-6, Cys-9, Cys-32, and Cys-36. The C4-type zinc-finger motif lies at 6-36 (CAFCGADIPPGYGIMYVKSDGTVLRYCSRKC).

Belongs to the eukaryotic ribosomal protein eL24 family. In terms of assembly, part of the 50S ribosomal subunit. Forms a cluster with proteins L3 and L14. Zn(2+) serves as cofactor.

Functionally, binds to the 23S rRNA. The chain is Large ribosomal subunit protein eL24 from Pyrobaculum arsenaticum (strain DSM 13514 / JCM 11321 / PZ6).